We begin with the raw amino-acid sequence, 1363 residues long: Homeobox protein 13 (1363 aa).

A coiled-coil region spans residues F15–N73. 9 disordered regions span residues Q66–P96, S120–S177, I308–G437, L621–Q731, H765–S818, S857–I911, Q1001–N1137, N1166–R1202, and I1270–S1341. Over residues N73–P96 the composition is skewed to polar residues. The segment covering S132–S147 has biased composition (low complexity). The segment covering R148 to S158 has biased composition (polar residues). Low complexity-rich tracts occupy residues N159–S177 and S315–N326. The segment covering N327–R339 has biased composition (basic residues). Over residues T348–I378 the composition is skewed to low complexity. Positions L379–S393 are enriched in polar residues. Low complexity-rich tracts occupy residues K394–I408, N415–N426, N641–I693, H709–Q731, and Q770–N793. The stretch at Q738 to N789 forms a coiled coil. Polar residues-rich tracts occupy residues S794–S818 and S857–R883. Low complexity-rich tracts occupy residues I889 to I911, Q1001 to F1031, and N1045 to N1063. The segment covering K1064–L1078 has biased composition (basic and acidic residues). The segment covering P1081–L1095 has biased composition (polar residues). 3 stretches are compositionally biased toward low complexity: residues S1096–S1116, T1123–N1137, and N1166–N1177. Residues E1179–D1195 are compositionally biased toward acidic residues. Residues K1198–N1261 constitute a DNA-binding region (homeobox). A compositionally biased stretch (low complexity) spans S1275 to L1294. Residues N1297–I1316 show a composition bias toward polar residues. Low complexity predominate over residues N1317–N1334.

Its subcellular location is the nucleus. Putative transcription factor. The sequence is that of Homeobox protein 13 (hbx13) from Dictyostelium discoideum (Social amoeba).